The sequence spans 441 residues: Gamma-glutamyl phosphate reductase (441 aa).

It belongs to the gamma-glutamyl phosphate reductase family.

It is found in the cytoplasm. It carries out the reaction L-glutamate 5-semialdehyde + phosphate + NADP(+) = L-glutamyl 5-phosphate + NADPH + H(+). It participates in amino-acid biosynthesis; L-proline biosynthesis; L-glutamate 5-semialdehyde from L-glutamate: step 2/2. Functionally, catalyzes the NADPH-dependent reduction of L-glutamate 5-phosphate into L-glutamate 5-semialdehyde and phosphate. The product spontaneously undergoes cyclization to form 1-pyrroline-5-carboxylate. This is Gamma-glutamyl phosphate reductase from Hydrogenobaculum sp. (strain Y04AAS1).